The chain runs to 281 residues: MAIRKLNPTTNGTRNMSILDYKTNLTGHAPEKSLMKILKKNSGRNNRGVITTRHKGGREKRFYRLVDFKRNKDNIEAIVKTIEYDPNRSANISLVTYLDGEKRYILSPKGIKVGQRIVSGENVDIIVGNSLELANIPEGTNIHNIELQPKGGGILARSAGSYAQILGKEESGKYVLIRLKSGEVRKVFAKCRATIGIVGNEEHSLVNIGKAGRNRHKGIRPTVRGSVMNPIDHPHGGGEGKQPIGRKAPLTPWGKKALGVKTRDNKKSSTKLIIRRRKESK.

The disordered stretch occupies residues 213 to 281 (RNRHKGIRPT…LIIRRRKESK (69 aa)).

It belongs to the universal ribosomal protein uL2 family. In terms of assembly, part of the 50S ribosomal subunit. Forms a bridge to the 30S subunit in the 70S ribosome.

One of the primary rRNA binding proteins. Required for association of the 30S and 50S subunits to form the 70S ribosome, for tRNA binding and peptide bond formation. It has been suggested to have peptidyltransferase activity; this is somewhat controversial. Makes several contacts with the 16S rRNA in the 70S ribosome. This chain is Large ribosomal subunit protein uL2, found in Mycoplasmopsis pulmonis (strain UAB CTIP) (Mycoplasma pulmonis).